We begin with the raw amino-acid sequence, 1369 residues long: Neurofascin (1369 aa).

The first 25 residues, 1–25 (MVLHSHQLTYAGIAFALCLHHLISA), serve as a signal peptide directing secretion. Over 26–1235 (IEVPLDSNIQ…NHVDIATQGW (1210 aa)) the chain is Extracellular. Ig-like C2-type domains lie at 42–138 (PTIT…LQVS) and 144–231 (PKEK…NPYT). 2 disulfide bridges follow: Cys64/Cys119 and Cys163/Cys214. N-linked (GlcNAc...) asparagine glycosylation is found at Asn241, Asn247, and Asn323. Ig-like C2-type domains lie at 262–350 (PSFM…ISVR), 355–442 (PYWL…AFVS), 448–535 (PRIL…VRLE), and 539–626 (PTRI…AYLT). 2 disulfides stabilise this stretch: Cys286/Cys334 and Cys376/Cys426. Asn427, Asn464, and Asn501 each carry an N-linked (GlcNAc...) asparagine glycan. Disulfide bonds link Cys470/Cys519 and Cys561/Cys610. 4 consecutive Fibronectin type-III domains span residues 645–740 (RPRD…TSGA), 745–838 (NPTG…SGED), 843–945 (APTD…TPEG), and 949–1057 (SPRY…TPAS). Asn692 carries an N-linked (GlcNAc...) asparagine glycan. Over residues 730-739 (MPSERYQTSG) the composition is skewed to polar residues. The tract at residues 730-753 (MPSERYQTSGARPEINPTGVQGAG) is disordered. Residues Asn767, Asn793, Asn853, Asn994, and Asn1009 are each glycosylated (N-linked (GlcNAc...) asparagine). The segment at 1078 to 1097 (TTATPTTETPPTEIPTTAIP) is disordered. N-linked (GlcNAc...) asparagine glycosylation is found at Asn1133, Asn1150, Asn1156, and Asn1171. The Fibronectin type-III 5 domain occupies 1133–1222 (NGSSIWDIRA…SYITFTTSSA (90 aa)). A helical membrane pass occupies residues 1236 to 1256 (FIGLMCAIALLVLILLIVCFI). Over 1257–1369 (KRSRGGKYPV…SPVNAIYSLA (113 aa)) the chain is Cytoplasmic. Basic and acidic residues-rich tracts occupy residues 1266–1282 (VRDN…KNVE) and 1289–1298 (RSLESDEDNK). Residues 1266–1369 (VRDNKDEHLN…SPVNAIYSLA (104 aa)) are disordered. Residues 1300-1313 (LPNSQTSLDGTIKQ) are compositionally biased toward polar residues.

Belongs to the immunoglobulin superfamily. L1/neurofascin/NgCAM family. In terms of processing, N-glycosylated and O-glycosylated. Post-translationally, may be proteolytically cleaved at Arg-636.

It is found in the cell membrane. In terms of biological role, cell adhesion, ankyrin-binding protein which may be involved in neurite extension, axonal guidance, synaptogenesis, myelination and neuron-glial cell interactions. This chain is Neurofascin (NFASC), found in Gallus gallus (Chicken).